The sequence spans 268 residues: Energy-coupling factor transporter transmembrane protein EcfT (268 aa).

Helical transmembrane passes span 28–48, 63–83, 107–127, 152–172, and 248–268; these read FVFL…YLWV, LWFL…TLMM, ILEG…ATIM, LPVH…PTLM, and ISLT…YSGV.

This sequence belongs to the energy-coupling factor EcfT family. As to quaternary structure, forms a stable energy-coupling factor (ECF) transporter complex composed of 2 membrane-embedded substrate-binding proteins (S component), 2 ATP-binding proteins (A component) and 2 transmembrane proteins (T component). May be able to interact with more than 1 S component at a time.

It is found in the cell membrane. In terms of biological role, transmembrane (T) component of an energy-coupling factor (ECF) ABC-transporter complex. Unlike classic ABC transporters this ECF transporter provides the energy necessary to transport a number of different substrates. The chain is Energy-coupling factor transporter transmembrane protein EcfT from Staphylococcus aureus (strain 04-02981).